The sequence spans 140 residues: Large ribosomal subunit protein uL11 (140 aa).

This sequence belongs to the universal ribosomal protein uL11 family. In terms of assembly, part of the ribosomal stalk of the 50S ribosomal subunit. Interacts with L10 and the large rRNA to form the base of the stalk. L10 forms an elongated spine to which L12 dimers bind in a sequential fashion forming a multimeric L10(L12)X complex. Post-translationally, one or more lysine residues are methylated.

Forms part of the ribosomal stalk which helps the ribosome interact with GTP-bound translation factors. In Dehalococcoides mccartyi (strain CBDB1), this protein is Large ribosomal subunit protein uL11.